Reading from the N-terminus, the 197-residue chain is LexA repressor (197 aa).

The segment at residues Val28–Val47 is a DNA-binding region (H-T-H motif). Residues Ser119 and Lys156 each act as for autocatalytic cleavage activity in the active site.

It belongs to the peptidase S24 family. Homodimer.

It catalyses the reaction Hydrolysis of Ala-|-Gly bond in repressor LexA.. In terms of biological role, represses a number of genes involved in the response to DNA damage (SOS response), including recA and lexA. In the presence of single-stranded DNA, RecA interacts with LexA causing an autocatalytic cleavage which disrupts the DNA-binding part of LexA, leading to derepression of the SOS regulon and eventually DNA repair. The polypeptide is LexA repressor (Thermotoga neapolitana).